We begin with the raw amino-acid sequence, 692 residues long: Elongation factor G (692 aa).

Residues 8 to 282 (EKTRNIGIMA…AVLDYLPAPT (275 aa)) form the tr-type G domain. GTP-binding positions include 17–24 (AHIDAGKT), 81–85 (DTPGH), and 135–138 (NKMD). A phosphoserine mark is found at Ser213, Ser302, Ser569, and Ser680.

Belongs to the TRAFAC class translation factor GTPase superfamily. Classic translation factor GTPase family. EF-G/EF-2 subfamily. Phosphorylated on threonine residue(s). Phosphorylated by PrkC and dephosphorylated by PrpC, in vitro.

Its subcellular location is the cytoplasm. Functionally, catalyzes the GTP-dependent ribosomal translocation step during translation elongation. During this step, the ribosome changes from the pre-translocational (PRE) to the post-translocational (POST) state as the newly formed A-site-bound peptidyl-tRNA and P-site-bound deacylated tRNA move to the P and E sites, respectively. Catalyzes the coordinated movement of the two tRNA molecules, the mRNA and conformational changes in the ribosome. This chain is Elongation factor G (fusA), found in Bacillus subtilis (strain 168).